The following is a 271-amino-acid chain: Peroxiredoxin-4 (271 aa).

Positions methionine 1–glycine 37 are cleaved as a signal peptide. Residues alanine 79–tyrosine 237 form the Thioredoxin domain. Cysteine 124 acts as the Cysteine sulfenic acid (-SOH) intermediate in catalysis.

Belongs to the peroxiredoxin family. AhpC/Prx1 subfamily. As to quaternary structure, homodimer; disulfide-linked, upon oxidation. 5 homodimers assemble to form a ring-like decamer. Can form heterodimers with PRDX1. Post-translationally, the enzyme can be inactivated by further oxidation of the cysteine sulfenic acid (C(P)-SOH) to sulphinic acid (C(P)-SO2H) and sulphonic acid (C(P)-SO3H) instead of its condensation to a disulfide bond.

Its subcellular location is the cytoplasm. It localises to the endoplasmic reticulum. It catalyses the reaction a hydroperoxide + [thioredoxin]-dithiol = an alcohol + [thioredoxin]-disulfide + H2O. Its function is as follows. Thiol-specific peroxidase that catalyzes the reduction of hydrogen peroxide and organic hydroperoxides to water and alcohols, respectively. Plays a role in cell protection against oxidative stress by detoxifying peroxides and as sensor of hydrogen peroxide-mediated signaling events. Regulates the activation of NF-kappa-B in the cytosol by a modulation of I-kappa-B-alpha phosphorylation. The polypeptide is Peroxiredoxin-4 (PRDX4) (Homo sapiens (Human)).